We begin with the raw amino-acid sequence, 450 residues long: MKATKTTYKKDPMGLTPSQIVNELNRFIVGQEKAKKAVAIALRNRCRRKRVEGNLRNEIVPKNILMIGSTGVGKTEIARRLATLTNSPFYKIEATKFTEVGYVGRDVESIIRDLVEIAVNTEKTLAKTKVDIHAREKAIERILDSLVGKTSSSETREKFKEKILNGELDDTEIEISVADTTPVGGGSFEIPGMPGASMGVLNLGDMIGRALGSSKTKTKKMLVKDAMAIIIPEESEKLIDQEKIIQQAINLAENDGIVFIDEIDKIASTGSSRAKNAEISREGVQRDLLPLIEGTTVNTKYGPVKTDHILFIASGAFHIAKPSDLLPELQGRLPIRVELNSLTKDDMIKILLEPETSLIKQYSALIGTEDVRLEFAASAIEKIADYAITVNLEVEDIGARRLHTILENLLEDISFEASEMKGKKITIDDKFVENQLSKIITNLDLAKFVL.

ATP-binding positions include Val29, 71–76 (GVGKTE), Asp261, Glu328, and Arg400.

Belongs to the ClpX chaperone family. HslU subfamily. As to quaternary structure, a double ring-shaped homohexamer of HslV is capped on each side by a ring-shaped HslU homohexamer. The assembly of the HslU/HslV complex is dependent on binding of ATP.

The protein localises to the cytoplasm. Functionally, ATPase subunit of a proteasome-like degradation complex; this subunit has chaperone activity. The binding of ATP and its subsequent hydrolysis by HslU are essential for unfolding of protein substrates subsequently hydrolyzed by HslV. HslU recognizes the N-terminal part of its protein substrates and unfolds these before they are guided to HslV for hydrolysis. The chain is ATP-dependent protease ATPase subunit HslU from Rickettsia rickettsii (strain Iowa).